The primary structure comprises 197 residues: Adenylyl-sulfate kinase (197 aa).

Residue 33-40 coordinates ATP; sequence GLSGSGKS. The Phosphoserine intermediate role is filled by Ser-107.

It belongs to the APS kinase family.

The catalysed reaction is adenosine 5'-phosphosulfate + ATP = 3'-phosphoadenylyl sulfate + ADP + H(+). The protein operates within sulfur metabolism; hydrogen sulfide biosynthesis; sulfite from sulfate: step 2/3. In terms of biological role, catalyzes the synthesis of activated sulfate. The protein is Adenylyl-sulfate kinase of Bacillus licheniformis (strain ATCC 14580 / DSM 13 / JCM 2505 / CCUG 7422 / NBRC 12200 / NCIMB 9375 / NCTC 10341 / NRRL NRS-1264 / Gibson 46).